We begin with the raw amino-acid sequence, 1299 residues long: Probable membrane antigen 75 (1299 aa).

The protein resides in the virion tegument. This is Probable membrane antigen 75 (75) from Saimiriine herpesvirus 2 (strain 11) (SaHV-2).